We begin with the raw amino-acid sequence, 184 residues long: Ribosome-recycling factor (184 aa).

The protein belongs to the RRF family.

Its subcellular location is the cytoplasm. Functionally, responsible for the release of ribosomes from messenger RNA at the termination of protein biosynthesis. May increase the efficiency of translation by recycling ribosomes from one round of translation to another. The sequence is that of Ribosome-recycling factor from Leptospira interrogans serogroup Icterohaemorrhagiae serovar copenhageni (strain Fiocruz L1-130).